Here is a 687-residue protein sequence, read N- to C-terminus: Glycine--tRNA ligase beta subunit (687 aa).

This sequence belongs to the class-II aminoacyl-tRNA synthetase family. As to quaternary structure, tetramer of two alpha and two beta subunits.

The protein resides in the cytoplasm. The enzyme catalyses tRNA(Gly) + glycine + ATP = glycyl-tRNA(Gly) + AMP + diphosphate. The chain is Glycine--tRNA ligase beta subunit from Geobacter sp. (strain M21).